A 291-amino-acid polypeptide reads, in one-letter code: Ribosomal RNA small subunit methyltransferase H (291 aa).

S-adenosyl-L-methionine is bound by residues G31–Y33, D49, F76, D97, and Q104.

This sequence belongs to the methyltransferase superfamily. RsmH family.

It localises to the cytoplasm. It catalyses the reaction cytidine(1402) in 16S rRNA + S-adenosyl-L-methionine = N(4)-methylcytidine(1402) in 16S rRNA + S-adenosyl-L-homocysteine + H(+). Specifically methylates the N4 position of cytidine in position 1402 (C1402) of 16S rRNA. The chain is Ribosomal RNA small subunit methyltransferase H from Anaplasma marginale (strain St. Maries).